We begin with the raw amino-acid sequence, 201 residues long: Charged multivesicular body protein 6 (201 aa).

The N-myristoyl glycine moiety is linked to residue G2. Residues 10–145 (QSRVTEQDKA…YQRQIDELLA (136 aa)) adopt a coiled-coil conformation. A Phosphoserine modification is found at S119. T130 is modified (phosphothreonine). The Type-2 MIT-interacting motif motif lies at 168 to 179 (IELPEVPSEPLP). Positions 171-201 (PEVPSEPLPEKIPEDVPVKARPRQAELVAAS) are disordered. Over residues 178–188 (LPEKIPEDVPV) the composition is skewed to basic and acidic residues.

Belongs to the SNF7 family. As to quaternary structure, probable core component of the endosomal sorting required for transport complex III (ESCRT-III). ESCRT-III components are thought to multimerize to form a flat lattice on the perimeter membrane of the endosome. Several assembly forms of ESCRT-III may exist that interact and act sequentially. Interacts with VPS4A; the interaction is direct. Interacts with VPS4B; the interaction is direct. Interacts with CHMP4A, CHMP4B and CHMP4C. Interacts with SNF8, VPS25 and VPS36. In terms of processing, ISGylated in a CHMP5-dependent manner. Isgylation weakens its interaction with VPS4A.

It is found in the endomembrane system. The protein localises to the endosome membrane. The protein resides in the late endosome membrane. Its subcellular location is the membrane. Probable core component of the endosomal sorting required for transport complex III (ESCRT-III) which is involved in multivesicular bodies (MVBs) formation and sorting of endosomal cargo proteins into MVBs. MVBs contain intraluminal vesicles (ILVs) that are generated by invagination and scission from the limiting membrane of the endosome and mostly are delivered to lysosomes enabling degradation of membrane proteins, such as stimulated growth factor receptors, lysosomal enzymes and lipids. The MVB pathway appears to require the sequential function of ESCRT-O, -I,-II and -III complexes. ESCRT-III proteins mostly dissociate from the invaginating membrane before the ILV is released. The ESCRT machinery also functions in topologically equivalent membrane fission events, such as the terminal stages of cytokinesis and the budding of enveloped viruses (lentiviruses). ESCRT-III proteins are believed to mediate the necessary vesicle extrusion and/or membrane fission activities, possibly in conjunction with the AAA ATPase VPS4. In the ESCRT-III complex, it probably serves as an acceptor for the ESCRT-II complex on endosomal membrane. The protein is Charged multivesicular body protein 6 (CHMP6) of Pongo abelii (Sumatran orangutan).